The chain runs to 211 residues: Dual specificity protein phosphatase 26 (211 aa).

Residues 60-207 enclose the Tyrosine-protein phosphatase domain; sequence NHADEVWPGL…LLALDRRLRQ (148 aa). C152 acts as the Phosphocysteine intermediate in catalysis.

Belongs to the protein-tyrosine phosphatase family. Non-receptor class dual specificity subfamily. In terms of assembly, interacts with HSF4.

The protein localises to the cytoplasm. It localises to the nucleus. Its subcellular location is the golgi apparatus. It catalyses the reaction O-phospho-L-tyrosyl-[protein] + H2O = L-tyrosyl-[protein] + phosphate. The catalysed reaction is O-phospho-L-seryl-[protein] + H2O = L-seryl-[protein] + phosphate. The enzyme catalyses O-phospho-L-threonyl-[protein] + H2O = L-threonyl-[protein] + phosphate. Its function is as follows. Inactivates MAPK1 and MAPK3 which leads to dephosphorylation of heat shock factor protein 4 and a reduction in its DNA-binding activity. In Pongo abelii (Sumatran orangutan), this protein is Dual specificity protein phosphatase 26 (DUSP26).